The sequence spans 347 residues: Heme A synthase (347 aa).

8 helical membrane-spanning segments follow: residues 14–34, 96–116, 129–149, 162–182, 199–219, 260–280, 287–307, and 311–331; these read VKIW…IGGI, FHRL…LYFM, FILI…MVKS, LAMH…HFLL, VFYI…LVAG, FIHE…LLVL, MYLL…TFIY, and IILA…SIYL. Histidine 262 is a binding site for heme. Histidine 317 lines the heme pocket.

It belongs to the COX15/CtaA family. Type 2 subfamily. As to quaternary structure, interacts with CtaB. It depends on heme b as a cofactor.

The protein localises to the cell membrane. The enzyme catalyses Fe(II)-heme o + 2 A + H2O = Fe(II)-heme a + 2 AH2. Its pathway is porphyrin-containing compound metabolism; heme A biosynthesis; heme A from heme O: step 1/1. In terms of biological role, catalyzes the conversion of heme O to heme A by two successive hydroxylations of the methyl group at C8. The first hydroxylation forms heme I, the second hydroxylation results in an unstable dihydroxymethyl group, which spontaneously dehydrates, resulting in the formyl group of heme A. The chain is Heme A synthase from Ehrlichia ruminantium (strain Gardel).